Reading from the N-terminus, the 427-residue chain is Endothelin-1 receptor (427 aa).

The N-terminal stretch at 1 to 20 is a signal peptide; sequence METFCFRVSFWVALLGCVIS. Over 21-80 the chain is Extracellular; that stretch reads DNPESHSTNLSTHVDDFTTFRGTEFSLVVTTHRPTNLALPSNGSMHNYCPQQTKITSAFK. N-linked (GlcNAc...) asparagine glycans are attached at residues asparagine 29 and asparagine 62. Residues 81–102 form a helical membrane-spanning segment; sequence YINTVISCTIFIVGMVGNATLL. Residues 103-112 are Cytoplasmic-facing; that stretch reads RIIYQNKCMR. A helical transmembrane segment spans residues 113–132; the sequence is NGPNALIASLALGDLIYVVI. Over 133-159 the chain is Extracellular; the sequence is DLPINVFKLLAGRWPFENHDFGVFLCK. Cysteine 158 and cysteine 239 are oxidised to a cystine. The helical transmembrane segment at 160 to 181 threads the bilayer; the sequence is LFPFLQKSSVGITVLNLCALSV. Over 182–205 the chain is Cytoplasmic; it reads DRYRAVASWSRVQGIGIPLVTAIE. The chain crosses the membrane as a helical span at residues 206-229; the sequence is IVSIWILSFILAIPEAIGFVMVPF. Topologically, residues 230-256 are extracellular; sequence EYKGEEHKTCMLNATSKFMEFYQDVKD. Residues 257–278 traverse the membrane as a helical segment; it reads WWLFGFYFCMPLVCTAIFYTLM. Over 279–306 the chain is Cytoplasmic; sequence TCEMLNRRNGSLRIALSEHLKQRREVAK. Residues 307–328 traverse the membrane as a helical segment; the sequence is TVFCLVVIFALCWFPLHLSRIL. Residues 329-347 lie on the Extracellular side of the membrane; it reads KKTVYDEMDKNRCELLSFL. Residues 348-372 form a helical membrane-spanning segment; that stretch reads LLMDYIGINLATMNSCINPIALYFV. Residues 373-427 are Cytoplasmic-facing; that stretch reads SKKFKNCFQSCLCCCCYQSKSLMTSVPMNGTSIQWKNHEQNNHNTERSSHKDSIN. Serine 425 carries the post-translational modification Phosphoserine.

This sequence belongs to the G-protein coupled receptor 1 family. Endothelin receptor subfamily. EDNRA sub-subfamily. In terms of assembly, interacts with HDAC7 and KAT5.

It localises to the cell membrane. Receptor for endothelin-1. Mediates its action by association with G proteins that activate a phosphatidylinositol-calcium second messenger system. The rank order of binding affinities for ET-A is: ET1 &gt; ET2 &gt;&gt; ET3. The sequence is that of Endothelin-1 receptor from Sus scrofa (Pig).